Reading from the N-terminus, the 1674-residue chain is Kinesin-like protein KIF14 (1674 aa).

Residues 1–391 form a required for PRC1-binding region; sequence MSVHTSHSRH…TEPDSLKVEN (391 aa). Disordered regions lie at residues 132–158 and 171–374; these read ETLN…KGVN and KDSN…PEEN. 2 stretches are compositionally biased toward polar residues: residues 142–151 and 202–214; these read GSDSASQASR and SRAP…QTEA. Serine 257 bears the Phosphoserine mark. Threonine 262 is subject to Phosphothreonine. Residues 267–279 are compositionally biased toward basic and acidic residues; sequence VLEHRWTPRHDPP. A compositionally biased stretch (polar residues) spans 302–311; sequence TFRSASSESR. Basic and acidic residues predominate over residues 317 to 329; that stretch reads VPEHRWTPRHDLP. The segment at 391-772 is required for microtubule-binding with high affinity; that stretch reads NSQVTVAVRV…AAQRSNRNID (382 aa). The 344-residue stretch at 393–736 folds into the Kinesin motor domain; it reads QVTVAVRVRP…LRYATQARLI (344 aa). 482–489 lines the ATP pocket; that stretch reads GQTGSGKS. A coiled-coil region spans residues 743–826; sequence NEDMNAKLIR…QETKELQKAG (84 aa). The 52-residue stretch at 860–911 folds into the FHA domain; the sequence is TTVGKHTPSSSHDIQLSGVLIADDHCTIRNFGGTVSIVPAGEAKTYVNGTHI. A required for CIT-binding region spans residues 936 to 1674; it reads PVEVQKGKKL…DCTPNRIQWV (739 aa). The stretch at 961 to 1110 forms a coiled coil; sequence EFAKNELLTA…VQMLQENRGN (150 aa). Residues serine 973 and serine 1326 each carry the phosphoserine modification. The segment at 1618 to 1674 is disordered; that stretch reads GLSKPWESCSSNSKEEQCKSDRADCGKSGPRRACEPHGDATPAVSSGDCTPNRIQWV. Basic and acidic residues predominate over residues 1630-1642; it reads SKEEQCKSDRADC. Over residues 1660-1674 the composition is skewed to polar residues; the sequence is AVSSGDCTPNRIQWV.

It belongs to the TRAFAC class myosin-kinesin ATPase superfamily. Kinesin family. Directly interacts with PRC1 within a complex also containing KIF4A, KIF20A and KIF23; targets to the central spindle. Directly interacts with CIT depending on the activation state of the kinase (stronger interaction with the kinase-dead form); targets to the midbody. Interacts with ARRB2; the interaction is detected in the nucleus upon OR1D2 stimulation. Interacts with AKT1; the interaction is detected in the plasma membrane upon INS stimulation and promotes AKT1 phosphorylation. Interacts with SVIL; at midbody during cytokinesis. Interacts with RADIL (via PDZ domain); recruits RADIL to the microtubule network restricting RADIL from interaction with activated RAP1A.

It is found in the nucleus. The protein localises to the cytoplasm. Its subcellular location is the cytoskeleton. It localises to the spindle. The protein resides in the midbody. Microtubule motor protein that binds to microtubules with high affinity through each tubulin heterodimer and has an ATPase activity. Plays a role in many processes like cell division, cytokinesis and also in cell proliferation and apoptosis. During cytokinesis, targets to central spindle and midbody through its interaction with PRC1 and CIT respectively. Regulates cell growth through regulation of cell cycle progression and cytokinesis. During cell cycle progression acts through SCF-dependent proteasomal ubiquitin-dependent protein catabolic process which controls CDKN1B degradation, resulting in positive regulation of cyclins, including CCNE1, CCND1 and CCNB1. During late neurogenesis, regulates the cerebellar and cerebral cortex development and olfactory bulb development through regulation of apoptosis, cell proliferation and cell division. Also is required for chromosome congression and alignment during mitotic cell cycle process. Regulates cell spreading, focal adhesion dynamics, and cell migration through its interaction with RADIL resulting in regulation of RAP1A-mediated inside-out integrin activation by tethering RADIL on microtubules. The protein is Kinesin-like protein KIF14 of Mus musculus (Mouse).